Here is a 553-residue protein sequence, read N- to C-terminus: Putative transport protein YidE (553 aa).

5 consecutive transmembrane segments (helical) span residues 4 to 24, 28 to 48, 65 to 85, 95 to 115, and 158 to 178; these read IALT…IGNI, GVGF…HFVD, FGLI…FFAS, LFAV…HKIF, and MSYA…MWLM. RCK C-terminal domains are found at residues 192-276 and 279-361; these read KHES…VIGK and DTSL…VVGN. The next 6 helical transmembrane spans lie at 371-391, 393-413, 437-457, 464-484, 493-513, and 533-553; these read MLPV…PLFV, GFPV…ALIL, LGIV…FVDT, LSWI…IGLL, YLTL…LAFA, and LVMF…WGMG.

It belongs to the AAE transporter (TC 2.A.81) family. YidE subfamily.

It is found in the cell membrane. In Salmonella paratyphi C (strain RKS4594), this protein is Putative transport protein YidE.